The primary structure comprises 291 residues: 4-diphosphocytidyl-2-C-methyl-D-erythritol kinase (291 aa).

Lys11 is a catalytic residue. An ATP-binding site is contributed by 94 to 104 (PAGSGLGGGSA). Asp136 is a catalytic residue.

This sequence belongs to the GHMP kinase family. IspE subfamily.

The enzyme catalyses 4-CDP-2-C-methyl-D-erythritol + ATP = 4-CDP-2-C-methyl-D-erythritol 2-phosphate + ADP + H(+). Its pathway is isoprenoid biosynthesis; isopentenyl diphosphate biosynthesis via DXP pathway; isopentenyl diphosphate from 1-deoxy-D-xylulose 5-phosphate: step 3/6. Its function is as follows. Catalyzes the phosphorylation of the position 2 hydroxy group of 4-diphosphocytidyl-2C-methyl-D-erythritol. This chain is 4-diphosphocytidyl-2-C-methyl-D-erythritol kinase, found in Treponema pallidum (strain Nichols).